A 720-amino-acid polypeptide reads, in one-letter code: Hexanoyl-CoA synthase (720 aa).

A helical membrane pass occupies residues 242 to 262; it reads VDAVVIYLAIVLAGYVVVSIA. 290 to 293 contributes to the CoA binding site; it reads RGKK. Residues 477 to 479, 499 to 504, glutamate 585, and arginine 607 contribute to the ATP site; these read GEA and EMCGGT. Glycine 615 contacts CoA. Lysine 618 serves as a coordination point for ATP. Glutamine 681 contributes to the CoA binding site.

It belongs to the ATP-dependent AMP-binding enzyme family. Mg(2+) serves as cofactor. Accumulates in glandular trichomes, especially in female flowers. Present at low levels in roots, stems and leaves.

It localises to the cytoplasm. The protein localises to the cytosol. The protein resides in the membrane. The enzyme catalyses hexanoate + ATP + CoA = hexanoyl-CoA + AMP + diphosphate. Its pathway is secondary metabolite biosynthesis; terpenoid biosynthesis. Its activity is regulated as follows. Inhibitied by high CoA concentrations. Involved in the biosynthesis of cannabinoids-related terpenophenolic natural products, which have pharmacological activity. Acyl-activating enzyme that catalyzes the conversion of hexanoic acid to hexanoyl-CoA, precursor of the cannabinoid pathway. Can also activate other fatty acids including heptanoate, octanoate and nonanoate. This Cannabis sativa (Hemp) protein is Hexanoyl-CoA synthase.